The following is a 204-amino-acid chain: MAEMIHLPRSTFERLKMYRKVLEATKKPYISSDEIARFLEINPDLVRKDFSYLNCQGKPRVGYDVEELRKELDDLFGVNNTTNMIIVGANDLARALLSLDFSKAGVKVVAVFDTERENVGKFIGEFAVRELDVLERVIRRFDAEIAALCVSKDRAQATAEFLIEKGIKAVWNFTGVHLDLPEGVIVVEEDLTQSLLTIKHLLKK.

The segment at residues 17-53 (MYRKVLEATKKPYISSDEIARFLEINPDLVRKDFSYL) is a DNA-binding region (H-T-H motif).

This sequence belongs to the transcriptional regulatory Rex family. As to quaternary structure, homodimer.

It is found in the cytoplasm. Functionally, modulates transcription in response to changes in cellular NADH/NAD(+) redox state. In Thermotoga maritima (strain ATCC 43589 / DSM 3109 / JCM 10099 / NBRC 100826 / MSB8), this protein is Redox-sensing transcriptional repressor Rex 2 (rex2).